The chain runs to 332 residues: tRNA-dihydrouridine(20/20a) synthase (332 aa).

FMN-binding positions include 20–22 (PMM) and Gln73. The active-site Proton donor is the Cys103. FMN-binding positions include Lys142, His174, 214-216 (NGG), and 236-237 (GR).

It belongs to the Dus family. DusA subfamily. The cofactor is FMN.

The catalysed reaction is 5,6-dihydrouridine(20) in tRNA + NADP(+) = uridine(20) in tRNA + NADPH + H(+). The enzyme catalyses 5,6-dihydrouridine(20) in tRNA + NAD(+) = uridine(20) in tRNA + NADH + H(+). It catalyses the reaction 5,6-dihydrouridine(20a) in tRNA + NADP(+) = uridine(20a) in tRNA + NADPH + H(+). It carries out the reaction 5,6-dihydrouridine(20a) in tRNA + NAD(+) = uridine(20a) in tRNA + NADH + H(+). In terms of biological role, catalyzes the synthesis of 5,6-dihydrouridine (D), a modified base found in the D-loop of most tRNAs, via the reduction of the C5-C6 double bond in target uridines. Specifically modifies U20 and U20a in tRNAs. The chain is tRNA-dihydrouridine(20/20a) synthase from Pseudomonas aeruginosa (strain ATCC 15692 / DSM 22644 / CIP 104116 / JCM 14847 / LMG 12228 / 1C / PRS 101 / PAO1).